The following is a 233-amino-acid chain: Lipoprotein-releasing system ATP-binding protein LolD (233 aa).

The ABC transporter domain occupies 6-233 (LQCDNLCKRY…TAELSLMGAE (228 aa)). Residue 42-49 (GSSGSGKS) participates in ATP binding.

The protein belongs to the ABC transporter superfamily. Lipoprotein translocase (TC 3.A.1.125) family. As to quaternary structure, the complex is composed of two ATP-binding proteins (LolD) and two transmembrane proteins (LolC and LolE).

The protein resides in the cell inner membrane. Part of the ABC transporter complex LolCDE involved in the translocation of mature outer membrane-directed lipoproteins, from the inner membrane to the periplasmic chaperone, LolA. Responsible for the formation of the LolA-lipoprotein complex in an ATP-dependent manner. The polypeptide is Lipoprotein-releasing system ATP-binding protein LolD (Shigella boydii serotype 4 (strain Sb227)).